A 1522-amino-acid polypeptide reads, in one-letter code: Rho guanine nucleotide exchange factor 11 (1522 aa).

The tract at residues 1–40 (MSVRLPQSIDRLSSLSSLGDSAPERKSPSHHRQPSDASET) is disordered. Residues serine 2, serine 14, serine 16, and serine 35 each carry the phosphoserine modification. The region spanning 47 to 126 (CVIIQKDQHG…LTLLGSSPSS (80 aa)) is the PDZ domain. 2 disordered regions span residues 128–175 (GISG…PEVQ) and 200–231 (YGDTSQRPSEGRLSLDSQEGDSGLDSGTERFP). The segment covering 149–161 (PSPPPPPPLPPPQ) has biased composition (pro residues). Serine 245 and serine 251 each carry phosphoserine. Threonine 254 carries the post-translational modification Phosphothreonine. Phosphoserine is present on residues serine 255 and serine 271. The tract at residues 263 to 286 (AQHHRRQGSDAAVPSTGDQGVDQS) is disordered. In terms of domain architecture, RGSL spans 306–486 (ESDIIFQDLE…NTYMSHAGIR (181 aa)). Residues 444-470 (LRERQVAEKQLAALGDILSKYEEDRSA) are a coiled coil. Residues 490 to 555 (ARPSNTAEKA…SSQSTFHIPL (66 aa)) form a disordered region. Basic and acidic residues predominate over residues 521 to 533 (SKKEKDALEDKKR). Serine 556, serine 635, and serine 663 each carry phosphoserine. Residues 573–680 (ENNQQYDAPE…FTPKMGRRSI (108 aa)) are disordered. Residues 601 to 637 (DSSRSEIRLGRSESLKGREEMKRSRKAENVPRSRSDV) show a composition bias toward basic and acidic residues. Residues 651–664 (SASSSTSSLSTRSL) show a composition bias toward low complexity. Phosphothreonine occurs at positions 668 and 672. The 190-residue stretch at 734-923 (DRQEVINELF…REILKYVNEA (190 aa)) folds into the DH domain. One can recognise a PH domain in the interval 965 to 1079 (KMIHEGPLTW…WMELLEEAVR (115 aa)). Residues 1084-1141 (HPGAAPMPVHPPPPGPREPAQQGPTPSRVELDDSDVFHGEPEPEELPGGTGSQQRVQG) form a disordered region. Residues 1091-1100 (PVHPPPPGPR) are compositionally biased toward pro residues. Basic and acidic residues predominate over residues 1112-1124 (VELDDSDVFHGEP). Serine 1155 carries the post-translational modification Phosphoserine. Disordered stretches follow at residues 1223 to 1320 (ETQA…AGGY), 1332 to 1423 (KVVP…RDVG), and 1453 to 1522 (LGGE…SPGP). The span at 1236 to 1245 (PTPSVISVTS) shows a compositional bias: polar residues. Phosphoserine is present on residues serine 1295 and serine 1300. The segment covering 1338-1353 (PESGQSEPGPPEVEGG) has biased composition (low complexity). Phosphoserine is present on residues serine 1457 and serine 1458. Threonine 1462 and threonine 1475 each carry phosphothreonine. Serine 1480 is subject to Phosphoserine. The span at 1503-1513 (DGSDAPLEDST) shows a compositional bias: acidic residues.

Interacts with GNA12 and GNA13 through the RGS domain. Interacts with RHOA, PLXNB1 and PLXNB2. Interacts with SLC1A6. Interacts (via DH domain) with GCSAM (via C-terminus). Found in a complex with ARHGEF11 and ARHGEF12; binding to ARHGEF11 and ARHGEF12 enhances CDC42 GEF activity of PLEKHG4B, and PLEKHG4B, in turn, inhibits ARHGEF11- and ARHGEF12-mediated RHOA activation. Phosphorylated by MAP kinase p38 (MAPK11, MAPK12, MAPK13 and/or MAPK14). Post-translationally, ubiquitinated by the BCR(KLHL20) E3 ubiquitin ligase complex when previously phosphorylated by MAP kinase p38 (MAPK11, MAPK12, MAPK13 and/or MAPK14), leading to its degradation, thereby restricting RhoA activity and facilitating growth cone spreading and neurite outgrowth. As to expression, ubiquitously expressed.

It localises to the cytoplasm. The protein resides in the membrane. May play a role in the regulation of RhoA GTPase by guanine nucleotide-binding alpha-12 (GNA12) and alpha-13 (GNA13). Acts as guanine nucleotide exchange factor (GEF) for RhoA GTPase and may act as GTPase-activating protein (GAP) for GNA12 and GNA13. Involved in neurotrophin-induced neurite outgrowth. This is Rho guanine nucleotide exchange factor 11 (ARHGEF11) from Homo sapiens (Human).